A 556-amino-acid chain; its full sequence is Arginine--tRNA ligase (556 aa).

The 'HIGH' region motif lies at 117–127 (PNVAKQMHVGH).

This sequence belongs to the class-I aminoacyl-tRNA synthetase family. As to quaternary structure, monomer.

The protein resides in the cytoplasm. The enzyme catalyses tRNA(Arg) + L-arginine + ATP = L-arginyl-tRNA(Arg) + AMP + diphosphate. The chain is Arginine--tRNA ligase from Cutibacterium acnes (strain DSM 16379 / KPA171202) (Propionibacterium acnes).